The following is a 452-amino-acid chain: Probable splicing factor, arginine/serine-rich 7 (452 aa).

RRM domains lie at 10-91 (KILH…YPNP) and 163-240 (RTVY…HSRV). The disordered stretch occupies residues 258–452 (EEAIRMGRNG…GNGDVVMASE (195 aa)). Over residues 259–272 (EAIRMGRNGDDRDR) the composition is skewed to basic and acidic residues. A compositionally biased stretch (basic residues) spans 273–290 (RRSRSPRRRRSPSPRRRR). Over residues 291 to 305 (DSRDRDRDRDRDRRR) the composition is skewed to basic and acidic residues. Basic residues-rich tracts occupy residues 323-335 (KRSR…RRSR), 345-360 (KRSR…KSRD), and 370-382 (SKDR…RSRS). The span at 383-421 (RSPEKRRDKEDRKTEKKENENESSLREKLLEKKAARKDS) shows a compositional bias: basic and acidic residues.

The protein belongs to the splicing factor SR family. In terms of processing, extensively phosphorylated on serine residues in the RS domain.

Its subcellular location is the nucleus. This Caenorhabditis elegans protein is Probable splicing factor, arginine/serine-rich 7 (rsp-7).